Consider the following 562-residue polypeptide: Endoglucanase E1 (562 aa).

Residues 1-41 (MPRALRRVPGSRVMLRVGVVVAVLALVAALANLAVPRPARA) form the signal peptide. The tract at residues 42 to 400 (AGGGYWHTSG…IKSSIFDPVG (359 aa)) is catalytic. A disulfide bridge connects residues Cys75 and Cys161. Glu203 serves as the catalytic Proton donor. Cysteines 209 and 212 form a disulfide. Glu323 functions as the Nucleophile in the catalytic mechanism. Residues 399 to 462 (VGASASPSSQ…PTPSPTAASG (64 aa)) are disordered. Composition is skewed to low complexity over residues 401 to 411 (ASASPSSQPSP) and 437 to 449 (PTPT…TPTP). In terms of domain architecture, CBM2 spans 458–562 (TAASGARCTA…AAPTVACAAS (105 aa)).

It belongs to the glycosyl hydrolase 5 (cellulase A) family.

The enzyme catalyses Endohydrolysis of (1-&gt;4)-beta-D-glucosidic linkages in cellulose, lichenin and cereal beta-D-glucans.. Its function is as follows. Has a very high specific activity on carboxymethylcellulose. In Acidothermus cellulolyticus (strain ATCC 43068 / DSM 8971 / 11B), this protein is Endoglucanase E1.